A 187-amino-acid polypeptide reads, in one-letter code: Putative glutathione-dependent formaldehyde-activating enzyme (187 aa).

The CENP-V/GFA domain occupies 20-166 (FQGGVLKCKC…FESLGLESYD (147 aa)). 7 residues coordinate Zn(2+): cysteine 27, cysteine 29, cysteine 48, cysteine 50, cysteine 53, cysteine 95, and cysteine 98.

Belongs to the Gfa family. Requires Zn(2+) as cofactor.

It carries out the reaction S-(hydroxymethyl)glutathione = glutathione + formaldehyde. Its pathway is one-carbon metabolism; formaldehyde degradation; formate from formaldehyde (glutathione route): step 1/3. Its function is as follows. Catalyzes the condensation of formaldehyde and glutathione to S-hydroxymethylglutathione. This chain is Putative glutathione-dependent formaldehyde-activating enzyme, found in Verticillium alfalfae (strain VaMs.102 / ATCC MYA-4576 / FGSC 10136) (Verticillium wilt of alfalfa).